The primary structure comprises 220 residues: 7-cyano-7-deazaguanine synthase (220 aa).

10–20 (FSGGQDSTTCL) is an ATP binding site. Zn(2+) contacts are provided by C186, C195, C198, and C201.

The protein belongs to the QueC family. As to quaternary structure, homodimer. The cofactor is Zn(2+).

The enzyme catalyses 7-carboxy-7-deazaguanine + NH4(+) + ATP = 7-cyano-7-deazaguanine + ADP + phosphate + H2O + H(+). Its pathway is purine metabolism; 7-cyano-7-deazaguanine biosynthesis. Catalyzes the ATP-dependent conversion of 7-carboxy-7-deazaguanine (CDG) to 7-cyano-7-deazaguanine (preQ(0)). The sequence is that of 7-cyano-7-deazaguanine synthase from Bacillus cereus (strain AH187).